The sequence spans 588 residues: Aspartate--tRNA ligase (588 aa).

Glu172 serves as a coordination point for L-aspartate. An aspartate region spans residues 196 to 199 (QLFK). Arg218 contributes to the L-aspartate binding site. Residues 218 to 220 (RDE) and Gln227 contribute to the ATP site. His449 serves as a coordination point for L-aspartate. An ATP-binding site is contributed by Glu483. Arg490 contributes to the L-aspartate binding site. 535–538 (GLDR) serves as a coordination point for ATP.

Belongs to the class-II aminoacyl-tRNA synthetase family. Type 1 subfamily. Homodimer.

It is found in the cytoplasm. The catalysed reaction is tRNA(Asp) + L-aspartate + ATP = L-aspartyl-tRNA(Asp) + AMP + diphosphate. Its function is as follows. Catalyzes the attachment of L-aspartate to tRNA(Asp) in a two-step reaction: L-aspartate is first activated by ATP to form Asp-AMP and then transferred to the acceptor end of tRNA(Asp). In Haemophilus influenzae (strain PittEE), this protein is Aspartate--tRNA ligase.